The primary structure comprises 521 residues: Glucomannan 4-beta-mannosyltransferase 1 (521 aa).

The chain crosses the membrane as a helical span at residues 22 to 42; that stretch reads VIVPLLRLAVAVCLTMSVLLF. D123 is an active-site residue. The substrate site is built by D182 and D184. D276 is an active-site residue. A run of 4 helical transmembrane segments spans residues 355-375, 391-411, 471-491, and 495-515; these read IIAH…TIFV, IITL…FFWI, VTEL…LAFG, and FFIY…GYVG.

The protein belongs to the glycosyltransferase 2 family. Plant cellulose synthase-like A subfamily.

The protein resides in the golgi apparatus membrane. The catalysed reaction is GDP-mannose + (glucomannan)n = GDP + (glucomannan)n+1.. In terms of biological role, possesses glucomannan synthase and mannan synthase activities in vitro. Mannan synthase consists of a 4-beta-mannosyltransferase activity on mannan using GDP-mannose. The beta-1,4-mannan product is the backbone for galactomannan synthesis by galactomannan galactosyltransferase. Galactomannan is a noncellulosic polysaccharides of plant cell wall. The protein is Glucomannan 4-beta-mannosyltransferase 1 of Oryza sativa subsp. japonica (Rice).